The chain runs to 257 residues: MKTPHKKGAAKEQMGEGVGHHIGSTTIKKKKASQKRQRSRSSSRRSIVGCRISHGWKEGDEPITQWKGTVLDQVPINPSLYLVKYDGIDCVYGLELHRDERILKLKILPDKVSFSGVSDVRLANTIIGKAVEHMFEGEHGSKDEWRGMVLAQAPIMNAWFYITYERDPVLYMYQLLDDYKEGDLRIMPESSASPPADREPEGVVDGLIGKHVEYTKEDGSKRTGKVIHQVKAKPSVYFIKFDDDFHIYVYDLVKKNS.

The segment at 1 to 47 (MKTPHKKGAAKEQMGEGVGHHIGSTTIKKKKASQKRQRSRSSSRRSI) is disordered. Over residues 27-43 (IKKKKASQKRQRSRSSS) the composition is skewed to basic residues. Tudor-like domain stretches follow at residues 48 to 97 (VGCR…LELH), 127 to 176 (IGKA…YQLL), and 208 to 253 (IGKH…YDLV). Histone H3K4me3 and H3R8me2a binding stretches follow at residues E136 and 244-246 (DFH).

Belongs to the SPIN/STSY family. In terms of assembly, interacts with C11orf84/SPINDOC.

The protein resides in the nucleus. Functionally, may be involved in the regulation of cell cycle progression. Exhibits H3K4me3-binding activity. This is Spindlin-2C (Spin2c) from Mus musculus (Mouse).